Reading from the N-terminus, the 188-residue chain is uncharacterized protein (188 aa).

Belongs to the isochorismatase family.

This is an uncharacterized protein from Escherichia coli O157:H7.